We begin with the raw amino-acid sequence, 224 residues long: uncharacterized protein (224 aa).

The active site involves Asp52.

This sequence belongs to the pseudouridine synthase RluA family.

The enzyme catalyses a uridine in RNA = a pseudouridine in RNA. This is an uncharacterized protein from Haemophilus influenzae (strain ATCC 51907 / DSM 11121 / KW20 / Rd).